The primary structure comprises 184 residues: Ribosome-recycling factor (184 aa).

Residues 141 to 164 (DEKNGDITEDDLRSQTEDVQKATD) are disordered.

This sequence belongs to the RRF family.

Its subcellular location is the cytoplasm. In terms of biological role, responsible for the release of ribosomes from messenger RNA at the termination of protein biosynthesis. May increase the efficiency of translation by recycling ribosomes from one round of translation to another. The polypeptide is Ribosome-recycling factor (Staphylococcus haemolyticus (strain JCSC1435)).